Reading from the N-terminus, the 86-residue chain is MANSASSRKRARQAVKRNKHNSQIRAKVRTFIKKVTYALEAGNKEQAQNCFTIMQKMLDQAVNKGLIHKNQAARKKSRLNSQIKAL.

The segment at M1–R25 is disordered. A compositionally biased stretch (basic residues) spans S7–R25.

This sequence belongs to the bacterial ribosomal protein bS20 family.

In terms of biological role, binds directly to 16S ribosomal RNA. This chain is Small ribosomal subunit protein bS20, found in Vesicomyosocius okutanii subsp. Calyptogena okutanii (strain HA).